The primary structure comprises 1822 residues: Signal-induced proliferation-associated 1-like protein 1 (1822 aa).

Disordered regions lie at residues 1–30 and 47–125; these read MTSLKRSQTERPVTADRASVVSTDGTPKVH and GSSV…VSLN. The segment covering 84–94 has biased composition (basic and acidic residues); the sequence is PPRKENVKESS. Over residues 95–125 the composition is skewed to low complexity; sequence RSSQEIETSSCLESLSSKGSPVSQGSSVSLN. Ser-162, Ser-187, Ser-193, Ser-208, Ser-255, and Ser-288 each carry phosphoserine. Residues 277–297 form a disordered region; sequence EREKPLKRRSKSETGDSSIFR. Residues 638–855 enclose the Rap-GAP domain; it reads FMKLDEQGLN…RTRQEYLKDL (218 aa). Residues 992–1068 enclose the PDZ domain; the sequence is EMTLRRNGLG…VKVVIIPPHD (77 aa). Residues Ser-1117, Ser-1126, Ser-1155, Ser-1166, Ser-1188, Ser-1209, and Ser-1220 each carry the phosphoserine modification. Residues 1134-1165 are disordered; sequence AGKGDGKMPLPERAANIPRSISSDGRPLERRL. The segment at 1183-1252 is disordered; that stretch reads SQCRNSPSNL…WQRSEDSLAD (70 aa). Residues 1188-1198 are compositionally biased toward low complexity; that stretch reads SPSNLSSSSET. A compositionally biased stretch (polar residues) spans 1225–1244; the sequence is DRQNTQSDIGGSGKSTPSWQ. 2 positions are modified to phosphoserine: Ser-1273 and Ser-1288. The tract at residues 1286–1324 is disordered; sequence HLSPNKQGHSDSHYSSHSSSNTLSSNASSAHSDEKWYDG. Residues 1300 to 1315 show a composition bias toward low complexity; that stretch reads SSHSSSNTLSSNASSA. The residue at position 1344 (Ser-1344) is a Phosphoserine; by PLK2. A Phosphothreonine; by PLK2 modification is found at Thr-1348. Residues 1358-1367 are compositionally biased toward low complexity; it reads TASLGASTSS. The segment at 1358–1382 is disordered; sequence TASLGASTSSPRSGPGKEKVAPLWH. A Phosphoserine; by CDK5 modification is found at Ser-1367. At Ser-1384 the chain carries Phosphoserine. A compositionally biased stretch (basic and acidic residues) spans 1395 to 1407; it reads LETEGHGMDRKTE. Positions 1395-1493 are disordered; that stretch reads LETEGHGMDR…SSSGPRTFYP (99 aa). Residues Ser-1408, Ser-1409, Ser-1430, Ser-1449, and Ser-1451 each carry the phosphoserine modification. The span at 1417–1436 shows a compositional bias: polar residues; that stretch reads KSQGGSSPLTRENSTFSIND. 2 stretches are compositionally biased toward low complexity: residues 1437–1451 and 1471–1486; these read ATSHTSTMSSRHSAS and SSQLAPSFSSSSSSSS. Phosphoserine is present on residues Ser-1546 and Ser-1567. Positions 1567 to 1595 are disordered; sequence SPTPESQKNFKFHGLSSPQSPFPSTPTSR. Thr-1569 carries the post-translational modification Phosphothreonine. Ser-1572, Ser-1583, Ser-1586, Ser-1603, and Ser-1606 each carry phosphoserine. The residue at position 1619 (Arg-1619) is an Asymmetric dimethylarginine. Phosphoserine occurs at positions 1621, 1665, 1668, 1726, 1729, 1746, 1747, and 1752. A coiled-coil region spans residues 1753–1813; sequence PTLASKVDQL…ASDKLKKFTE (61 aa).

As to quaternary structure, interacts (via PDZ domain) with EPHA4 (via PDZ motif); controls neuronal morphology through regulation of the RAP1 (RAP1A or RAP1B) and RAP2 (RAP2A, RAP2B or RAP2C) GTPases. Interacts with DLG4, PDLIM5, PDLIM7 and LZTS3. Interacts with the actin cytoskeleton. Ubiquitinated and degraded by the SCF(BTRC) following phosphorylation by PLK2. In terms of processing, phosphorylated at Ser-1367 by CDK5, creating a docking site for the POLO box domains of PLK2. Subsequently, PLK2 binds and phosphorylates SIPA1L1, leading to ubiquitination and degradation by the proteasome. As to expression, detected in brain (at protein level).

It is found in the cytoplasm. The protein localises to the cytoskeleton. It localises to the postsynaptic density. Its subcellular location is the synapse. The protein resides in the synaptosome. Its function is as follows. Stimulates the GTPase activity of RAP2A. Promotes reorganization of the actin cytoskeleton and recruits DLG4 to F-actin. Contributes to the regulation of dendritic spine morphogenesis. This chain is Signal-induced proliferation-associated 1-like protein 1 (Sipa1l1), found in Rattus norvegicus (Rat).